Reading from the N-terminus, the 474-residue chain is tRNA-2-methylthio-N(6)-dimethylallyladenosine synthase (474 aa).

Positions 3–120 (KKLLIKTWGC…LPQMIKDSQS (118 aa)) constitute an MTTase N-terminal domain. Cysteine 12, cysteine 49, cysteine 83, cysteine 157, cysteine 161, and cysteine 164 together coordinate [4Fe-4S] cluster. The Radical SAM core domain occupies 143-375 (RADGVTAFVS…QQQINTQAMR (233 aa)). The TRAM domain maps to 378–441 (RQMLNTEQRI…TNSLRGELVR (64 aa)).

This sequence belongs to the methylthiotransferase family. MiaB subfamily. As to quaternary structure, monomer. [4Fe-4S] cluster is required as a cofactor.

The protein localises to the cytoplasm. It catalyses the reaction N(6)-dimethylallyladenosine(37) in tRNA + (sulfur carrier)-SH + AH2 + 2 S-adenosyl-L-methionine = 2-methylsulfanyl-N(6)-dimethylallyladenosine(37) in tRNA + (sulfur carrier)-H + 5'-deoxyadenosine + L-methionine + A + S-adenosyl-L-homocysteine + 2 H(+). Functionally, catalyzes the methylthiolation of N6-(dimethylallyl)adenosine (i(6)A), leading to the formation of 2-methylthio-N6-(dimethylallyl)adenosine (ms(2)i(6)A) at position 37 in tRNAs that read codons beginning with uridine. This Photobacterium profundum (strain SS9) protein is tRNA-2-methylthio-N(6)-dimethylallyladenosine synthase.